The primary structure comprises 151 residues: Protein E6 (151 aa).

2 zinc fingers span residues cysteine 30 to cysteine 66 and cysteine 103 to cysteine 139. Residues threonine 149–valine 151 carry the PDZ-binding domain motif.

The protein belongs to the papillomaviridae E6 protein family. Forms homodimers. Interacts with ubiquitin-protein ligase UBE3A/E6-AP and thus forms a complex with human TP53. Interacts with human NFX1 and MAGI3. Interacts with human IRF3; this interaction inhibits the establishment of antiviral state. Interacts with human TYK2; this interaction inhibits JAK-STAT activation by interferon alpha. Interacts with host DLG1; this interaction leads to the proteasomal degradation of DLG1.

Its subcellular location is the host cytoplasm. It localises to the host nucleus. In terms of biological role, plays a major role in the induction and maintenance of cellular transformation. Acts mainly as an oncoprotein by stimulating the destruction of many host cell key regulatory proteins. E6 associates with host UBE3A/E6-AP ubiquitin-protein ligase, and inactivates tumor suppressors TP53 and TP73 by targeting them to the 26S proteasome for degradation. In turn, DNA damage and chromosomal instabilities increase and lead to cell proliferation and cancer development. The complex E6/E6AP targets several other substrates to degradation via the proteasome including host DLG1 or NFX1, a repressor of human telomerase reverse transcriptase (hTERT). The resulting increased expression of hTERT prevents the shortening of telomere length leading to cell immortalization. Other cellular targets including BAK1, Fas-associated death domain-containing protein (FADD) and procaspase 8, are degraded by E6/E6AP causing inhibition of apoptosis. E6 also inhibits immune response by interacting with host IRF3 and TYK2. These interactions prevent IRF3 transcriptional activities and inhibit TYK2-mediated JAK-STAT activation by interferon alpha resulting in inhibition of the interferon signaling pathway. This chain is Protein E6, found in Homo sapiens (Human).